Here is a 202-residue protein sequence, read N- to C-terminus: Putative 3-methyladenine DNA glycosylase (202 aa).

The protein belongs to the DNA glycosylase MPG family.

The sequence is that of Putative 3-methyladenine DNA glycosylase from Alkaliphilus oremlandii (strain OhILAs) (Clostridium oremlandii (strain OhILAs)).